A 953-amino-acid polypeptide reads, in one-letter code: Coatomer subunit beta (953 aa).

7 HEAT repeats span residues 17–54, 96–131, 132–168, 240–276, 277–314, 316–353, and 396–433; these read DSEP…NGEK, QEMI…KEAE, LLEP…NFEH, SERA…SAPT, AIKA…HPSH, RVLQ…SRNV, and DMAA…RFDN.

Oligomeric complex that consists of at least the alpha, beta, beta', gamma, delta, epsilon and zeta subunits.

The protein localises to the cytoplasm. It is found in the golgi apparatus membrane. Its subcellular location is the cytoplasmic vesicle. It localises to the COPI-coated vesicle membrane. Its function is as follows. The coatomer is a cytosolic protein complex that binds to dilysine motifs and reversibly associates with Golgi non-clathrin-coated vesicles, which further mediate biosynthetic protein transport from the ER, via the Golgi up to the trans Golgi network. Coatomer complex is required for budding from Golgi membranes, and is essential for the retrograde Golgi-to-ER transport of dilysine-tagged proteins. The sequence is that of Coatomer subunit beta (COPB1) from Gallus gallus (Chicken).